The primary structure comprises 489 residues: UDP-N-acetylmuramate--L-alanine ligase (489 aa).

128 to 134 lines the ATP pocket; it reads GTHGKTT.

Belongs to the MurCDEF family.

The protein localises to the cytoplasm. It carries out the reaction UDP-N-acetyl-alpha-D-muramate + L-alanine + ATP = UDP-N-acetyl-alpha-D-muramoyl-L-alanine + ADP + phosphate + H(+). Its pathway is cell wall biogenesis; peptidoglycan biosynthesis. Its function is as follows. Cell wall formation. The protein is UDP-N-acetylmuramate--L-alanine ligase of Shewanella halifaxensis (strain HAW-EB4).